Consider the following 78-residue polypeptide: Exodeoxyribonuclease 7 small subunit (78 aa).

Belongs to the XseB family. Heterooligomer composed of large and small subunits.

It localises to the cytoplasm. It catalyses the reaction Exonucleolytic cleavage in either 5'- to 3'- or 3'- to 5'-direction to yield nucleoside 5'-phosphates.. Bidirectionally degrades single-stranded DNA into large acid-insoluble oligonucleotides, which are then degraded further into small acid-soluble oligonucleotides. The polypeptide is Exodeoxyribonuclease 7 small subunit (Actinobacillus succinogenes (strain ATCC 55618 / DSM 22257 / CCUG 43843 / 130Z)).